We begin with the raw amino-acid sequence, 398 residues long: Glia-derived nexin (398 aa).

The N-terminal stretch at M1–C19 is a signal peptide. N-linked (GlcNAc...) asparagine glycosylation is found at N118 and N159.

Belongs to the serpin family.

It is found in the secreted. The protein resides in the extracellular space. Its function is as follows. Serine protease inhibitor with activity toward thrombin, trypsin, and urokinase. Promotes neurite extension by inhibiting thrombin. Binds heparin. In Homo sapiens (Human), this protein is Glia-derived nexin (SERPINE2).